We begin with the raw amino-acid sequence, 605 residues long: Probable potassium transport system protein Kup (605 aa).

The next 12 helical transmembrane spans lie at 18-38 (GLVF…IIAL), 46-66 (ILGI…LEYA), 97-117 (MAFV…DGVI), 138-158 (GLSQ…LFVF), 169-189 (AFGP…AISV), 204-224 (AISF…EVIL), 247-267 (AWYF…AFII), 287-307 (FYIP…QALI), 339-359 (IYIG…MLVF), 368-388 (AYGF…TMIF), 395-415 (WKVP…VSNC), and 418-438 (LPHG…VILI).

Belongs to the HAK/KUP transporter (TC 2.A.72) family.

The protein localises to the cell inner membrane. It carries out the reaction K(+)(in) + H(+)(in) = K(+)(out) + H(+)(out). Transport of potassium into the cell. Likely operates as a K(+):H(+) symporter. This chain is Probable potassium transport system protein Kup, found in Pelobacter propionicus (strain DSM 2379 / NBRC 103807 / OttBd1).